A 142-amino-acid polypeptide reads, in one-letter code: Hemoglobin subunit alpha (142 aa).

The 141-residue stretch at 2-142 folds into the Globin domain; sequence VLSPADKTNI…VSTVLTSKYR (141 aa). At S4 the chain carries Phosphoserine. Residue K8 is modified to N6-succinyllysine. At T9 the chain carries Phosphothreonine. At K12 the chain carries N6-succinyllysine. The residue at position 17 (K17) is an N6-acetyllysine; alternate. At K17 the chain carries N6-succinyllysine; alternate. Y25 carries the post-translational modification Phosphotyrosine. Residue S36 is modified to Phosphoserine. Residue K41 is modified to N6-succinyllysine. Position 50 is a phosphoserine (S50). H59 provides a ligand contact to O2. H88 provides a ligand contact to heme b. Phosphoserine is present on S103. At T109 the chain carries Phosphothreonine. Position 125 is a phosphoserine (S125). T135 and T138 each carry phosphothreonine. S139 carries the phosphoserine modification.

This sequence belongs to the globin family. In terms of assembly, heterotetramer of two alpha chains and two beta chains. In terms of tissue distribution, red blood cells.

Functionally, involved in oxygen transport from the lung to the various peripheral tissues. In terms of biological role, hemopressin acts as an antagonist peptide of the cannabinoid receptor CNR1. Hemopressin-binding efficiently blocks cannabinoid receptor CNR1 and subsequent signaling. The sequence is that of Hemoglobin subunit alpha (HBA) from Canis latrans (Coyote).